The primary structure comprises 894 residues: Septin and tuftelin-interacting protein 1 homolog (894 aa).

2 disordered regions span residues 71–149 and 187–225; these read YEPN…DKPV and NAGLASVTELNVNSSDDSDDSDQSEGDTDSDNENKRSLG. The segment covering 73 to 84 has biased composition (basic and acidic residues); sequence PNEHKLKNKDGE. Basic residues predominate over residues 97–126; that stretch reads KKKKKEKKEKKQKKKEKKEKKEKKNKKKNK. Residues 149-195 enclose the G-patch domain; it reads VGGIGAALLSKMGYKGTGGLGRDGGGMVEPIKVQVRPKNAGLASVTE. Positions 202–217 are enriched in acidic residues; it reads DDSDDSDQSEGDTDSD. Residues 329–449 are a coiled coil; that stretch reads KQIDIQNQDN…SDNNDNSSLE (121 aa). A disordered region spans residues 785-821; sequence NNNNNNNINNSYQQQNQQQPIKPISSPSLNSSNNNNI.

The protein belongs to the TFP11/STIP family. In terms of assembly, identified in the spliceosome C complex.

It is found in the cytoplasm. The protein resides in the nucleus. May be involved in pre-mRNA splicing. The polypeptide is Septin and tuftelin-interacting protein 1 homolog (stip-1) (Dictyostelium discoideum (Social amoeba)).